We begin with the raw amino-acid sequence, 90 residues long: Probable Fe(2+)-trafficking protein (90 aa).

The protein belongs to the Fe(2+)-trafficking protein family. As to quaternary structure, monomer.

Could be a mediator in iron transactions between iron acquisition and iron-requiring processes, such as synthesis and/or repair of Fe-S clusters in biosynthetic enzymes. The chain is Probable Fe(2+)-trafficking protein from Edwardsiella ictaluri (strain 93-146).